The chain runs to 315 residues: tRNA dimethylallyltransferase (315 aa).

Position 13-20 (13-20 (GPTASGKT)) interacts with ATP. 15–20 (TASGKT) lines the substrate pocket. Interaction with substrate tRNA regions lie at residues 38–41 (DSAL), 162–166 (QRLSR), 243–248 (RCVGYR), and 276–283 (KRQITWLR).

This sequence belongs to the IPP transferase family. In terms of assembly, monomer. Mg(2+) serves as cofactor.

The enzyme catalyses adenosine(37) in tRNA + dimethylallyl diphosphate = N(6)-dimethylallyladenosine(37) in tRNA + diphosphate. Catalyzes the transfer of a dimethylallyl group onto the adenine at position 37 in tRNAs that read codons beginning with uridine, leading to the formation of N6-(dimethylallyl)adenosine (i(6)A). The protein is tRNA dimethylallyltransferase of Vibrio vulnificus (strain CMCP6).